A 240-amino-acid chain; its full sequence is Putative S-adenosylmethionine-dependent methyltransferase RcsF (240 aa).

The TsaA-like domain maps to 5–142; it reads ISPIGHVRSC…YVPYADIVPD (138 aa). Residues 22–24, 63–64, Arg91, and 122–125 each bind S-adenosyl-L-methionine; these read PRQ, HQ, and LDGT.

This sequence belongs to the tRNA methyltransferase O family.

In Pseudomonas aeruginosa, this protein is Putative S-adenosylmethionine-dependent methyltransferase RcsF (rcsF).